Consider the following 267-residue polypeptide: tRNA pseudouridine synthase A (267 aa).

Asp-53 serves as the catalytic Nucleophile. Tyr-111 is a substrate binding site.

The protein belongs to the tRNA pseudouridine synthase TruA family. As to quaternary structure, homodimer.

It catalyses the reaction uridine(38/39/40) in tRNA = pseudouridine(38/39/40) in tRNA. Functionally, formation of pseudouridine at positions 38, 39 and 40 in the anticodon stem and loop of transfer RNAs. The chain is tRNA pseudouridine synthase A from Alcanivorax borkumensis (strain ATCC 700651 / DSM 11573 / NCIMB 13689 / SK2).